Reading from the N-terminus, the 419-residue chain is 3-isopropylmalate dehydratase large subunit (419 aa).

C300, C360, and C363 together coordinate [4Fe-4S] cluster.

The protein belongs to the aconitase/IPM isomerase family. LeuC type 2 subfamily. In terms of assembly, heterodimer of LeuC and LeuD. [4Fe-4S] cluster serves as cofactor.

It catalyses the reaction (2R,3S)-3-isopropylmalate = (2S)-2-isopropylmalate. Its pathway is amino-acid biosynthesis; L-leucine biosynthesis; L-leucine from 3-methyl-2-oxobutanoate: step 2/4. Functionally, catalyzes the isomerization between 2-isopropylmalate and 3-isopropylmalate, via the formation of 2-isopropylmaleate. This chain is 3-isopropylmalate dehydratase large subunit, found in Desulfatibacillum aliphaticivorans.